Reading from the N-terminus, the 913-residue chain is DNA mismatch repair protein MutS (913 aa).

An ATP-binding site is contributed by 720-727 (GPNASGKS).

Belongs to the DNA mismatch repair MutS family.

This protein is involved in the repair of mismatches in DNA. It is possible that it carries out the mismatch recognition step. This protein has a weak ATPase activity. The protein is DNA mismatch repair protein MutS of Prochlorococcus marinus (strain MIT 9312).